A 753-amino-acid polypeptide reads, in one-letter code: 5-methyltetrahydropteroyltriglutamate--homocysteine methyltransferase (753 aa).

5-methyltetrahydropteroyltri-L-glutamate is bound by residues 17–20 and K117; that span reads RELK. L-homocysteine is bound by residues 431–433 and E484; that span reads IGS. L-methionine is bound by residues 431 to 433 and E484; that span reads IGS. 5-methyltetrahydropteroyltri-L-glutamate contacts are provided by residues 515 to 516 and W561; that span reads RC. D599 is a binding site for L-homocysteine. Position 599 (D599) interacts with L-methionine. Position 605 (E605) interacts with 5-methyltetrahydropteroyltri-L-glutamate. Positions 641, 643, and 665 each coordinate Zn(2+). H694 functions as the Proton donor in the catalytic mechanism. C726 contributes to the Zn(2+) binding site.

The protein belongs to the vitamin-B12 independent methionine synthase family. Requires Zn(2+) as cofactor.

It carries out the reaction 5-methyltetrahydropteroyltri-L-glutamate + L-homocysteine = tetrahydropteroyltri-L-glutamate + L-methionine. The protein operates within amino-acid biosynthesis; L-methionine biosynthesis via de novo pathway; L-methionine from L-homocysteine (MetE route): step 1/1. Catalyzes the transfer of a methyl group from 5-methyltetrahydrofolate to homocysteine resulting in methionine formation. The protein is 5-methyltetrahydropteroyltriglutamate--homocysteine methyltransferase of Escherichia fergusonii (strain ATCC 35469 / DSM 13698 / CCUG 18766 / IAM 14443 / JCM 21226 / LMG 7866 / NBRC 102419 / NCTC 12128 / CDC 0568-73).